A 542-amino-acid polypeptide reads, in one-letter code: Peptide chain release factor 3 (542 aa).

The tr-type G domain occupies 14–283 (DKRRNFAIIS…AFLEYALKPG (270 aa)). Residues 23–30 (SHPDAGKT), 91–95 (DTPGH), and 145–148 (NKMD) contribute to the GTP site.

Belongs to the TRAFAC class translation factor GTPase superfamily. Classic translation factor GTPase family. PrfC subfamily.

The protein localises to the cytoplasm. Its function is as follows. Increases the formation of ribosomal termination complexes and stimulates activities of RF-1 and RF-2. It binds guanine nucleotides and has strong preference for UGA stop codons. It may interact directly with the ribosome. The stimulation of RF-1 and RF-2 is significantly reduced by GTP and GDP, but not by GMP. The chain is Peptide chain release factor 3 from Trichodesmium erythraeum (strain IMS101).